The following is a 388-amino-acid chain: (S)-8-oxocitronellyl enol synthase (388 aa).

NADP(+) contacts are provided by residues 38–40 (TGI), 66–67 (RR), 84–85 (DV), 108–109 (SW), and Gln142. Active-site residues include Lys146 and Tyr178. Residues Lys146 and Tyr178 each contribute to the substrate site. Residues Tyr178, Val204, and 211–213 (SMM) contribute to the NADP(+) site. Ser349 is a binding site for substrate.

The protein belongs to the short-chain dehydrogenases/reductases (SDR) family. Highly divergent. As to quaternary structure, homodimer. Expressed in internal phloem-associated parenchyma (IPAP) cells.

It is found in the cytoplasm. Its subcellular location is the cytosol. It catalyses the reaction (S)-8-oxocitronellyl enol + NADP(+) = (6E)-8-oxogeranial + NADPH + H(+). It carries out the reaction (S)-8-oxocitronellyl enol + NAD(+) = (6E)-8-oxogeranial + NADH + H(+). Iridoid synthase that catalyzes the first step in generation of the iridoid ring scaffold using the linear monoterpene (6E)-8-oxogeranial as substrate. Iridoids comprise a large family of distinctive bicyclic monoterpenes that possess a wide range of pharmacological activities, including anticancer, anti-inflammatory, antifungal and antibacterial activities. The protein is (S)-8-oxocitronellyl enol synthase of Catharanthus roseus (Madagascar periwinkle).